A 184-amino-acid polypeptide reads, in one-letter code: dTTP/UTP pyrophosphatase (184 aa).

The active-site Proton acceptor is the aspartate 65.

Belongs to the Maf family. YhdE subfamily. Requires a divalent metal cation as cofactor.

The protein localises to the cytoplasm. It catalyses the reaction dTTP + H2O = dTMP + diphosphate + H(+). It carries out the reaction UTP + H2O = UMP + diphosphate + H(+). Nucleoside triphosphate pyrophosphatase that hydrolyzes dTTP and UTP. May have a dual role in cell division arrest and in preventing the incorporation of modified nucleotides into cellular nucleic acids. This chain is dTTP/UTP pyrophosphatase, found in Thermococcus onnurineus (strain NA1).